The sequence spans 144 residues: Putative pre-16S rRNA nuclease (144 aa).

The protein belongs to the YqgF nuclease family.

Its subcellular location is the cytoplasm. In terms of biological role, could be a nuclease involved in processing of the 5'-end of pre-16S rRNA. The polypeptide is Putative pre-16S rRNA nuclease (Lactiplantibacillus plantarum (strain ATCC BAA-793 / NCIMB 8826 / WCFS1) (Lactobacillus plantarum)).